A 209-amino-acid chain; its full sequence is NAD(P)H dehydrogenase (quinone) (209 aa).

A Flavodoxin-like domain is found at 4–199 (VNIIFHSVHA…EMARYQGRHV (196 aa)). FMN-binding positions include 10-15 (SVHAHI) and 87-89 (TRY). Trp-107 serves as a coordination point for substrate. Residues 122–128 (SSGTQHG) and His-143 each bind FMN.

It belongs to the WrbA family. The cofactor is FMN.

The enzyme catalyses a quinone + NADH + H(+) = a quinol + NAD(+). The catalysed reaction is a quinone + NADPH + H(+) = a quinol + NADP(+). The sequence is that of NAD(P)H dehydrogenase (quinone) from Methanosarcina mazei (strain ATCC BAA-159 / DSM 3647 / Goe1 / Go1 / JCM 11833 / OCM 88) (Methanosarcina frisia).